Reading from the N-terminus, the 442-residue chain is UDP-N-acetylmuramate--L-alanine ligase (442 aa).

109 to 115 lines the ATP pocket; that stretch reads GAHGKTS.

Belongs to the MurCDEF family.

The protein localises to the cytoplasm. It carries out the reaction UDP-N-acetyl-alpha-D-muramate + L-alanine + ATP = UDP-N-acetyl-alpha-D-muramoyl-L-alanine + ADP + phosphate + H(+). Its pathway is cell wall biogenesis; peptidoglycan biosynthesis. Functionally, cell wall formation. In Streptococcus pyogenes serotype M6 (strain ATCC BAA-946 / MGAS10394), this protein is UDP-N-acetylmuramate--L-alanine ligase.